Reading from the N-terminus, the 341-residue chain is Phosphoribosylformylglycinamidine cyclo-ligase (341 aa).

It belongs to the AIR synthase family.

It localises to the cytoplasm. It carries out the reaction 2-formamido-N(1)-(5-O-phospho-beta-D-ribosyl)acetamidine + ATP = 5-amino-1-(5-phospho-beta-D-ribosyl)imidazole + ADP + phosphate + H(+). The protein operates within purine metabolism; IMP biosynthesis via de novo pathway; 5-amino-1-(5-phospho-D-ribosyl)imidazole from N(2)-formyl-N(1)-(5-phospho-D-ribosyl)glycinamide: step 2/2. This chain is Phosphoribosylformylglycinamidine cyclo-ligase, found in Finegoldia magna (strain ATCC 29328 / DSM 20472 / WAL 2508) (Peptostreptococcus magnus).